The following is a 490-amino-acid chain: Betaine aldehyde dehydrogenase (490 aa).

Residues Ser-26, Ile-27, and Asp-93 each contribute to the K(+) site. 150 to 152 is a binding site for NAD(+); the sequence is GAW. Lys-162 acts as the Charge relay system in catalysis. Residues 176-179 and 230-233 contribute to the NAD(+) site; these read KPSE and GVET. A K(+)-binding site is contributed by Leu-246. Residue Glu-252 is the Proton acceptor of the active site. 3 residues coordinate NAD(+): Gly-254, Cys-286, and Glu-387. Catalysis depends on Cys-286, which acts as the Nucleophile. Cysteine sulfenic acid (-SOH) is present on Cys-286. Lys-457 and Gly-460 together coordinate K(+). The active-site Charge relay system is the Glu-464.

It belongs to the aldehyde dehydrogenase family. Dimer of dimers. K(+) serves as cofactor.

It carries out the reaction betaine aldehyde + NAD(+) + H2O = glycine betaine + NADH + 2 H(+). The protein operates within amine and polyamine biosynthesis; betaine biosynthesis via choline pathway; betaine from betaine aldehyde: step 1/1. Functionally, involved in the biosynthesis of the osmoprotectant glycine betaine. Catalyzes the irreversible oxidation of betaine aldehyde to the corresponding acid. The chain is Betaine aldehyde dehydrogenase from Acinetobacter baumannii (strain AB307-0294).